Consider the following 334-residue polypeptide: Glycerol-3-phosphate dehydrogenase [NAD(P)+] (334 aa).

Positions 13, 33, and 106 each coordinate NADPH. Sn-glycerol 3-phosphate contacts are provided by Lys-106, Gly-137, and Ser-139. Ala-141 lines the NADPH pocket. 5 residues coordinate sn-glycerol 3-phosphate: Lys-192, Asp-245, Ser-255, Arg-256, and Asn-257. The active-site Proton acceptor is the Lys-192. NADPH is bound at residue Arg-256. Residues Val-280 and Glu-282 each coordinate NADPH.

The protein belongs to the NAD-dependent glycerol-3-phosphate dehydrogenase family.

The protein resides in the cytoplasm. It catalyses the reaction sn-glycerol 3-phosphate + NAD(+) = dihydroxyacetone phosphate + NADH + H(+). The enzyme catalyses sn-glycerol 3-phosphate + NADP(+) = dihydroxyacetone phosphate + NADPH + H(+). It participates in membrane lipid metabolism; glycerophospholipid metabolism. Catalyzes the reduction of the glycolytic intermediate dihydroxyacetone phosphate (DHAP) to sn-glycerol 3-phosphate (G3P), the key precursor for phospholipid synthesis. This is Glycerol-3-phosphate dehydrogenase [NAD(P)+] from Chlamydia muridarum (strain MoPn / Nigg).